Reading from the N-terminus, the 263-residue chain is Undecaprenyl-diphosphatase 2 (263 aa).

Helical transmembrane passes span 15-37 (GLTEFLPVSSTGHMILTGHLIGF), 42-62 (AKVFEVVIQLGSILAVVVIFW), 79-99 (SLNLLHIIIGMIPAGVLGVLF), 107-127 (LFGPGPVVISLVAGGILMIVA), 142-162 (ITYKQAFTIGMFQCLALWPGF), 183-203 (AEYTFILAVPMMVAASGLDLI), 216-236 (LFVTGFVTAFVVAMLAIVSFL), and 242-262 (VKLTPFAYYRFILAAVFYFFI).

Belongs to the UppP family.

The protein localises to the cell membrane. It carries out the reaction di-trans,octa-cis-undecaprenyl diphosphate + H2O = di-trans,octa-cis-undecaprenyl phosphate + phosphate + H(+). In terms of biological role, catalyzes the dephosphorylation of undecaprenyl diphosphate (UPP). Confers resistance to bacitracin. This is Undecaprenyl-diphosphatase 2 from Bacillus cereus (strain ATCC 14579 / DSM 31 / CCUG 7414 / JCM 2152 / NBRC 15305 / NCIMB 9373 / NCTC 2599 / NRRL B-3711).